A 768-amino-acid polypeptide reads, in one-letter code: Ribonucleoside-diphosphate reductase large chain (768 aa).

Residues 7–8 (SK) and 13–19 (EKLGIDL) each bind ATP. The GDP site is built by Thr-196 and Ser-211. An intrachain disulfide couples Cys-212 to Cys-437. DTTP-binding positions include 220-222 (DSI), Lys-237, and Arg-250. Asn-420 contacts GDP. The active-site Proton acceptor is the Asn-420. Catalysis depends on Cys-422, which acts as the Cysteine radical intermediate. Glu-424 serves as a coordination point for GDP. Glu-424 acts as the Proton acceptor in catalysis.

The protein belongs to the ribonucleoside diphosphate reductase large chain family. Heterodimer of a large and a small subunit.

It catalyses the reaction a 2'-deoxyribonucleoside 5'-diphosphate + [thioredoxin]-disulfide + H2O = a ribonucleoside 5'-diphosphate + [thioredoxin]-dithiol. With respect to regulation, under complex allosteric control mediated by deoxynucleoside triphosphates and ATP binding to separate specificity and activation sites on the large subunit. The type of nucleotide bound at the specificity site determines substrate preference. It seems probable that ATP makes the enzyme reduce CDP and UDP, dGTP favors ADP reduction and dTTP favors GDP reduction. Stimulated by ATP and inhibited by dATP binding to the activity site. Its function is as follows. Provides the precursors necessary for DNA synthesis. Catalyzes the biosynthesis of deoxyribonucleotides from the corresponding ribonucleotides. The polypeptide is Ribonucleoside-diphosphate reductase large chain (Encephalitozoon cuniculi (strain GB-M1) (Microsporidian parasite)).